The chain runs to 138 residues: uncharacterized protein (138 aa).

The helical transmembrane segment at Ile-11 to Tyr-33 threads the bilayer.

The protein resides in the membrane. This is an uncharacterized protein from Aquifex aeolicus (strain VF5).